A 322-amino-acid chain; its full sequence is Allergen Asp f 4 (322 aa).

The N-terminal stretch at 1–20 (MQLKNSMLLLTALAAGSSVA) is a signal peptide. The segment covering 80-105 (AAAAAASTPEPSSSHSDSSSSSGVSA) has biased composition (low complexity). The tract at residues 80–109 (AAAAAASTPEPSSSHSDSSSSSGVSADWTN) is disordered.

It localises to the secreted. The polypeptide is Allergen Asp f 4 (Aspergillus fumigatus (strain ATCC MYA-4609 / CBS 101355 / FGSC A1100 / Af293) (Neosartorya fumigata)).